The chain runs to 528 residues: GMP synthase [glutamine-hydrolyzing] (528 aa).

The 192-residue stretch at 13 to 204 (SILILDFGSQ…VYKISCCAAD (192 aa)) folds into the Glutamine amidotransferase type-1 domain. Catalysis depends on C90, which acts as the Nucleophile. Residues H178 and E180 contribute to the active site. In terms of domain architecture, GMPS ATP-PPase spans 205–403 (WTTETYIEET…LGLPAEIIKR (199 aa)). 232–238 (SGGVDSS) lines the ATP pocket.

Homodimer.

It catalyses the reaction XMP + L-glutamine + ATP + H2O = GMP + L-glutamate + AMP + diphosphate + 2 H(+). Its pathway is purine metabolism; GMP biosynthesis; GMP from XMP (L-Gln route): step 1/1. In terms of biological role, catalyzes the synthesis of GMP from XMP. The sequence is that of GMP synthase [glutamine-hydrolyzing] from Prochlorococcus marinus (strain MIT 9215).